A 192-amino-acid polypeptide reads, in one-letter code: MISISDTAQAHFCKLLEKQEPDTNIRVFVVNPGTPSAECGVSYCPPDAVESTDTTLEFNGFDAVVDAESAPFLSEAEIDFVTDQMGSQLTLKAPNAKARKVDDDAPLEERINYMIEAEINPQLASHGGKVMLMEITEKGEAILQFGGGCNGCSMVDVTLKDGIEKQMLAQFSGELTAVKDATEHEAGEHSYY.

Positions 149 and 152 each coordinate [4Fe-4S] cluster.

Belongs to the NfuA family. In terms of assembly, homodimer. The cofactor is [4Fe-4S] cluster.

Its function is as follows. Involved in iron-sulfur cluster biogenesis. Binds a 4Fe-4S cluster, can transfer this cluster to apoproteins, and thereby intervenes in the maturation of Fe/S proteins. Could also act as a scaffold/chaperone for damaged Fe/S proteins. The chain is Fe/S biogenesis protein NfuA from Pseudoalteromonas atlantica (strain T6c / ATCC BAA-1087).